A 587-amino-acid chain; its full sequence is MFS-type transporter opaD (587 aa).

A run of 9 helical transmembrane segments spans residues 87–107, 124–146, 153–173, 184–204, 214–234, 242–262, 284–304, 315–335, and 357–377; these read VAIM…NTIL, MGWY…GKLL, WVYI…GVSP, ISGT…TIIV, GILS…GGAF, WCFY…LLLF, IIGL…LQWG, IIAL…VEYW, and LFTF…PIWF. Asn-382 carries an N-linked (GlcNAc...) asparagine glycan. 5 helical membrane passes run 393–413, 414–434, 447–467, 483–503, and 554–574; these read IPLI…VTTL, GYYI…AGLL, IGFQ…PLVV, LVTL…QSVF, and VYLV…PIRW.

The protein belongs to the major facilitator superfamily. TCR/Tet family.

The protein resides in the membrane. In terms of biological role, MFS-type transporter; part of the gene cluster that mediates the biosynthesis of oxepinamides, derivatives of anthranilyl-containing tripeptides that share an oxepin ring and a fused pyrimidinone moiety. The chain is MFS-type transporter opaD from Aspergillus ustus.